We begin with the raw amino-acid sequence, 24 residues long: General odorant-binding protein (24 aa).

Belongs to the PBP/GOBP family. In terms of assembly, homodimer. In terms of tissue distribution, antenna.

Its function is as follows. Present in the aqueous fluid surrounding olfactory sensory dendrites and are thought to aid in the capture and transport of hydrophobic odorants into and through this fluid. This is General odorant-binding protein from Antheraea polyphemus (Polyphemus moth).